The sequence spans 131 residues: UPF0102 protein YraN (131 aa).

Positions 1–19 are enriched in polar residues; it reads MATVPTRSGSPRQLTTKQT. Positions 1–21 are disordered; that stretch reads MATVPTRSGSPRQLTTKQTGD.

Belongs to the UPF0102 family.

This is UPF0102 protein YraN from Escherichia coli O7:K1 (strain IAI39 / ExPEC).